The chain runs to 554 residues: Estrogen receptor beta (554 aa).

The modulating stretch occupies residues 25–173 (TEIKNSPAGV…NPGSKKDAHF (149 aa)). NR C4-type zinc fingers lie at residues 174-194 (CAVC…CEGC) and 210-234 (CPAT…LRKC). The nuclear receptor DNA-binding region spans 174–239 (CAVCSDYASG…RLRKCYEVGM (66 aa)). Positions 289 to 521 (SPEQFVLTLL…DLLLEMLNAH (233 aa)) constitute an NR LBD domain. A disordered region spans residues 529-554 (PLATHPEFGPLEQMEPGESLRKGEPQ).

Belongs to the nuclear hormone receptor family. NR3 subfamily. Binds DNA as a homodimer. Can form a heterodimer with ER-alpha. As to expression, brain, pituitary, skeletal muscle, liver, adrenal, kidney, intestine and ovary.

The protein localises to the nucleus. Binds estrogens with an affinity similar to that of ER-alpha, and activates expression of reporter genes containing estrogen response elements (ERE) in an estrogen-dependent manner. Locally synthesized estrogens may act via ER beta, in addition to ER alpha, to mediate seasonal or developmental effects on nearby song nuclei. The chain is Estrogen receptor beta (ESR2) from Sturnus vulgaris (Starling).